We begin with the raw amino-acid sequence, 311 residues long: 4-hydroxy-tetrahydrodipicolinate synthase (311 aa).

T51 provides a ligand contact to pyruvate. The active-site Proton donor/acceptor is Y140. Residue K168 is the Schiff-base intermediate with substrate of the active site. Position 209 (I209) interacts with pyruvate.

It belongs to the DapA family. In terms of assembly, homotetramer; dimer of dimers.

It is found in the cytoplasm. The catalysed reaction is L-aspartate 4-semialdehyde + pyruvate = (2S,4S)-4-hydroxy-2,3,4,5-tetrahydrodipicolinate + H2O + H(+). The protein operates within amino-acid biosynthesis; L-lysine biosynthesis via DAP pathway; (S)-tetrahydrodipicolinate from L-aspartate: step 3/4. Its function is as follows. Catalyzes the condensation of (S)-aspartate-beta-semialdehyde [(S)-ASA] and pyruvate to 4-hydroxy-tetrahydrodipicolinate (HTPA). The chain is 4-hydroxy-tetrahydrodipicolinate synthase from Streptococcus pneumoniae (strain 70585).